The chain runs to 289 residues: Mas-related G-protein coupled receptor member G (289 aa).

The Extracellular segment spans residues 1-13 (MFSIFNIWGTFNK). A helical transmembrane segment spans residues 14–34 (VLFFLSLTVSLAGLVGNALLL). Residues 35–52 (WHLGLHIKKGPFNTYLLH) are Cytoplasmic-facing. The chain crosses the membrane as a helical span at residues 53-73 (LAAADFLFLSCQVGFSIATIV). Residues 74 to 78 (SGHED) are Extracellular-facing. A helical membrane pass occupies residues 79-99 (TLYFPVTFLWFAVGLWLLAAF). The Cytoplasmic portion of the chain corresponds to 100–120 (SVDCCLAYMFPSFCSPNRRPR). Residues 121-141 (FTSVVLCLVIWALTMPAVLLP) form a helical membrane-spanning segment. Residues 142-164 (ANACGLLKNGMSLLVCLKYHWTS) lie on the Extracellular side of the membrane. The helical transmembrane segment at 165-185 (VTWLAVLSGMACGASKFLLIF) threads the bilayer. Residues 186-199 (GNCCSSQPPPKFCK) lie on the Cytoplasmic side of the membrane. Residues 200-220 (LAQCSGILLFFCRLPLVVYWC) traverse the membrane as a helical segment. At 221–222 (LR) the chain is on the extracellular side. Residues 223 to 243 (PVLKFLLPFFFPLATLLACID) traverse the membrane as a helical segment. Topologically, residues 244 to 289 (SSAKPLLYYMKGRQLRKDPLQVALNRALGEESQSGLGGLSLPMHQV) are cytoplasmic.

It belongs to the G-protein coupled receptor 1 family. Mas subfamily.

Its subcellular location is the cell membrane. Orphan receptor. May regulate nociceptor function and/or development, including the sensation or modulation of pain. The polypeptide is Mas-related G-protein coupled receptor member G (Mrgprg) (Mus musculus (Mouse)).